A 140-amino-acid polypeptide reads, in one-letter code: Putative pre-16S rRNA nuclease (140 aa).

It belongs to the YqgF nuclease family.

The protein localises to the cytoplasm. Could be a nuclease involved in processing of the 5'-end of pre-16S rRNA. This chain is Putative pre-16S rRNA nuclease, found in Mannheimia succiniciproducens (strain KCTC 0769BP / MBEL55E).